A 124-amino-acid polypeptide reads, in one-letter code: Small ribosomal subunit protein uS12 (124 aa).

At Asp89 the chain carries 3-methylthioaspartic acid.

This sequence belongs to the universal ribosomal protein uS12 family. As to quaternary structure, part of the 30S ribosomal subunit. Contacts proteins S8 and S17. May interact with IF1 in the 30S initiation complex.

Functionally, with S4 and S5 plays an important role in translational accuracy. Interacts with and stabilizes bases of the 16S rRNA that are involved in tRNA selection in the A site and with the mRNA backbone. Located at the interface of the 30S and 50S subunits, it traverses the body of the 30S subunit contacting proteins on the other side and probably holding the rRNA structure together. The combined cluster of proteins S8, S12 and S17 appears to hold together the shoulder and platform of the 30S subunit. The chain is Small ribosomal subunit protein uS12 from Vibrio atlanticus (strain LGP32) (Vibrio splendidus (strain Mel32)).